The following is a 348-amino-acid chain: GTP 3',8-cyclase (348 aa).

The Radical SAM core domain maps to 24–242; the sequence is PFGRAVTYLR…EKQFTLTDID (219 aa). Arginine 33 is a binding site for GTP. Positions 40 and 44 each coordinate [4Fe-4S] cluster. Tyrosine 46 lines the S-adenosyl-L-methionine pocket. Cysteine 47 lines the [4Fe-4S] cluster pocket. Arginine 82 is a GTP binding site. Glycine 86 is an S-adenosyl-L-methionine binding site. Threonine 115 is a GTP binding site. Serine 139 serves as a coordination point for S-adenosyl-L-methionine. A GTP-binding site is contributed by lysine 175. Methionine 209 is a binding site for S-adenosyl-L-methionine. Residues cysteine 272 and cysteine 275 each coordinate [4Fe-4S] cluster. 277–279 lines the GTP pocket; it reads RVR. Cysteine 289 is a binding site for [4Fe-4S] cluster.

This sequence belongs to the radical SAM superfamily. MoaA family. In terms of assembly, monomer and homodimer. [4Fe-4S] cluster is required as a cofactor.

It catalyses the reaction GTP + AH2 + S-adenosyl-L-methionine = (8S)-3',8-cyclo-7,8-dihydroguanosine 5'-triphosphate + 5'-deoxyadenosine + L-methionine + A + H(+). Its pathway is cofactor biosynthesis; molybdopterin biosynthesis. Functionally, catalyzes the cyclization of GTP to (8S)-3',8-cyclo-7,8-dihydroguanosine 5'-triphosphate. In Rhizobium etli (strain CIAT 652), this protein is GTP 3',8-cyclase.